The following is a 342-amino-acid chain: MKEKKKEIEKLLARPDLTPEQMKNYGMEYAKIEEIENITNRIKETQEFIELLREEGENELEIEKYEKELDQLYQELLFLLSPEASDKAIVEIRPGTGGEEAALFARDLFRMYTRYAERKGWNLEVAEIHETDLGGIREVVFFVKGKNAYGILKYESGVHRVQRVPVTESGGRIHTSTATVAVLPEIEEKDIEIRPEDLKIETFRASGHGGQYVNKTESAVRITHLPTGIVVSCQNERSQYQNKQTALRILRARLYQLQKEQKEREISQKRKSQIGTGERSEKIRTYNFPQNRVTDHRINYTSYRLQEILDGDLDEIISKLIEHDIENNLEEVLGIGASVEEK.

At Gln-211 the chain carries N5-methylglutamine. The interval 262-282 is disordered; sequence KEREISQKRKSQIGTGERSEK.

It belongs to the prokaryotic/mitochondrial release factor family. In terms of processing, methylated by PrmC. Methylation increases the termination efficiency of RF1.

It is found in the cytoplasm. In terms of biological role, peptide chain release factor 1 directs the termination of translation in response to the peptide chain termination codons UAG and UAA. This is Peptide chain release factor 1 (prfA) from Thermotoga maritima (strain ATCC 43589 / DSM 3109 / JCM 10099 / NBRC 100826 / MSB8).